The primary structure comprises 201 residues: Large ribosomal subunit protein uL4 (201 aa).

The interval 44–68 (RAQKSRADVSGSGRKPWRQKGTGRA) is disordered.

The protein belongs to the universal ribosomal protein uL4 family. In terms of assembly, part of the 50S ribosomal subunit.

In terms of biological role, one of the primary rRNA binding proteins, this protein initially binds near the 5'-end of the 23S rRNA. It is important during the early stages of 50S assembly. It makes multiple contacts with different domains of the 23S rRNA in the assembled 50S subunit and ribosome. Its function is as follows. Forms part of the polypeptide exit tunnel. In Buchnera aphidicola subsp. Schizaphis graminum (strain Sg), this protein is Large ribosomal subunit protein uL4.